Reading from the N-terminus, the 232-residue chain is Thiamine import ATP-binding protein ThiQ (232 aa).

In terms of domain architecture, ABC transporter spans 2–230; it reads LKLTDITWLY…KASASALLGI (229 aa). 32–39 provides a ligand contact to ATP; that stretch reads GPSGAGKS.

The protein belongs to the ABC transporter superfamily. Thiamine importer (TC 3.A.1.19.1) family. The complex is composed of two ATP-binding proteins (ThiQ), two transmembrane proteins (ThiP) and a solute-binding protein (ThiB).

It is found in the cell inner membrane. It carries out the reaction thiamine(out) + ATP + H2O = thiamine(in) + ADP + phosphate + H(+). Functionally, part of the ABC transporter complex ThiBPQ involved in thiamine import. Responsible for energy coupling to the transport system. The chain is Thiamine import ATP-binding protein ThiQ from Escherichia coli (strain UTI89 / UPEC).